A 92-amino-acid polypeptide reads, in one-letter code: Calitoxin (92 aa).

Positions Met-1–Ser-20 are cleaved as a signal peptide. Residues Arg-21–Ala-42 constitute a propeptide that is removed on maturation. Disulfide bonds link Cys-47–Cys-86, Cys-49–Cys-77, and Cys-67–Cys-87.

Belongs to the sea anemone sodium channel inhibitory toxin family. In terms of tissue distribution, expressed both outside and in acontia, a specialised envenomation structure laden with batteries of venom-containing nematocysts found only in the superfamily Metridioidea.

The protein localises to the secreted. Its subcellular location is the nematocyst. Its function is as follows. In neuromuscular preparation of crustaceans, the toxin increased neurotransmitter release, causing repetitive firing of the axons. May affect sodium channels (Nav). This chain is Calitoxin, found in Calliactis polypus (Hermit crab anemone).